Here is a 118-residue protein sequence, read N- to C-terminus: Autophagy-related protein 8 (118 aa).

Gly116 is lipidated: Phosphatidylethanolamine amidated glycine. Residues 117–118 (EA) constitute a propeptide, removed in mature form.

Belongs to the ATG8 family. Conjugation to phosphatidylethanolamine (PE) leads to homodimerization. Interacts with ATG1, ATG3, ATG4, ATG7 and ATG12. The C-terminal Glu-117 and Ala-118 residues of ATG8 are removed by ATG4 to expose Gly-116 at the C-terminus. This Gly-116 forms then a thioester bond with the 'Cys-550' of ATG7 (E1-like activating enzyme) before being transferred to the 'Cys-244' of ATG3 (the specific E2 conjugating enzyme), in order to be finally amidated with phosphatidylethanolamine. This lipid modification anchors ATG8 to membranes and can be reversed by ATG4, releasing soluble ATG8.

The protein localises to the cytoplasmic vesicle. It localises to the cvt vesicle membrane. Its subcellular location is the autophagosome membrane. The protein resides in the vacuole membrane. Functionally, ubiquitin-like modifier involved in cytoplasm to vacuole transport (Cvt) vesicles and autophagosome formation. With ATG4, mediates the delivery of the vesicles and autophagosomes to the vacuole via the microtubule cytoskeleton. Required for selective autophagic degradation of the nucleus (nucleophagy) as well as for mitophagy which contributes to regulate mitochondrial quantity and quality by eliminating the mitochondria to a basal level to fulfill cellular energy requirements and preventing excess ROS production. Also participates in membrane fusion events that take place in the early secretory pathway. Also involved in endoplasmic reticulum-specific autophagic process and is essential for the survival of cells subjected to severe ER stress. The ATG8-PE conjugate mediates tethering between adjacent membranes and stimulates membrane hemifusion, leading to expansion of the autophagosomal membrane during autophagy. Moreover not only conjugation, but also subsequent ATG8-PE deconjugation is an important step required to facilitate multiple events during macroautophagy, and especially for efficient autophagosome biogenesis, the assembly of ATG9-containing tubulovesicular clusters into phagophores/autophagosomes, and for the disassembly of PAS-associated ATG components. Autophagy is required for proper vegetative growth, asexual/sexual reproduction, and full virulence. Autophagy is particularly involved in the biosynthesis of deoxynivalenol (DON), an important virulence determinant. In Gibberella zeae (strain ATCC MYA-4620 / CBS 123657 / FGSC 9075 / NRRL 31084 / PH-1) (Wheat head blight fungus), this protein is Autophagy-related protein 8.